The following is a 325-amino-acid chain: Prenytransferase adrG (325 aa).

Transmembrane regions (helical) follow at residues 47 to 67 (LVGV…AVLL), 71 to 91 (MLLS…DDLI), 117 to 137 (ALLL…FLPW), 163 to 183 (PQIT…SLGL), 189 to 209 (MTPT…IDVI), 236 to 256 (LLSY…GVLT), and 258 to 278 (LGLP…WVLL).

The protein belongs to the UbiA prenyltransferase family. Requires Mg(2+) as cofactor.

The protein resides in the membrane. It carries out the reaction 3,5-dimethylorsellinate + (2E,6E)-farnesyl diphosphate = (3R)-3-farnesyl-6-hydroxy-2,3,5-trimethyl-4-oxocyclohexa-1,5-diene-1-carboxylate + diphosphate + H(+). The protein operates within secondary metabolite biosynthesis; terpenoid biosynthesis. In terms of biological role, prenytransferase; part of the gene cluster that mediates the biosynthesis of andrastins, meroterpenoid compounds that exhibit inhibitory activity against ras farnesyltransferase, suggesting that they could be promising leads for antitumor agents. The first step of the pathway is the synthesis of 3,5-dimethylorsellinic acid (DMOA) by the polyketide synthase adrD via condensation of one acetyl-CoA starter unit with 3 malonyl-CoA units and 2 methylations. DMAO is then converted to farnesyl-DMAO by the prenyltransferase adrG. The methyltransferase adrK catalyzes the methylation of the carboxyl group of farnesyl-DMAO to farnesyl-DMAO methyl ester which is further converted to epoxyfarnesyl-DMAO methyl ester by the FAD-dependent monooxygenase adrH. The terpene cyclase adrI then catalyzes the carbon skeletal rearrangement to generate the andrastin E, the first compound in the pathway having the andrastin scaffold, with the tetracyclic ring system. The post-cyclization tailoring enzymes adrF, adrE, adrJ, and adrA, are involved in the conversion of andrastin E into andrastin A. The short chain dehydrogenase adrF is responsible for the oxidation of the C-3 a hydroxyl group of andrastin E to yield the corresponding ketone, andrastin D. The ketoreductase adrE stereoselectively reduces the carbonyl moiety to reverse the stereochemistry of the C-3 position to yield andrastin F. The acetyltransferase adrJ is the acetyltransferase that attaches the acetyl group to the C-3 hydroxyl group of andrastin F to yield andrastin C. Finally, the cytochrome P450 monooxygenase adrA catalyzes two sequential oxidation reactions of the C-23 methyl group, to generate the corresponding alcohol andrastin B, and aldehyde andrastin A. The chain is Prenytransferase adrG from Penicillium rubens (strain ATCC 28089 / DSM 1075 / NRRL 1951 / Wisconsin 54-1255) (Penicillium chrysogenum).